A 105-amino-acid chain; its full sequence is Small ribosomal subunit protein bS20 (105 aa).

Belongs to the bacterial ribosomal protein bS20 family.

Binds directly to 16S ribosomal RNA. This Moorella thermoacetica (strain ATCC 39073 / JCM 9320) protein is Small ribosomal subunit protein bS20.